The following is a 616-amino-acid chain: ATP-dependent zinc metalloprotease FtsH (616 aa).

Topologically, residues 1 to 8 are cytoplasmic; sequence MRNLFKTA. Residues 9-29 form a helical membrane-spanning segment; it reads TIYILIALVILLLVDIFSGGL. Residues 30–114 are Extracellular-facing; it reads SYNQFFSNLS…VTKEPPQVPW (85 aa). A helical membrane pass occupies residues 115–135; that stretch reads WLSTFLPMLIFAGLMIFVWIF. Over 136-616 the chain is Cytoplasmic; the sequence is MLQQTQGGGS…VFEDAQPQLV (481 aa). 208 to 215 is an ATP binding site; the sequence is GPPGTGKT. Zn(2+) is bound at residue His-430. Glu-431 is a catalytic residue. Zn(2+)-binding residues include His-434 and Asp-506.

In the central section; belongs to the AAA ATPase family. This sequence in the C-terminal section; belongs to the peptidase M41 family. As to quaternary structure, homohexamer. Zn(2+) is required as a cofactor.

It is found in the cell membrane. Its function is as follows. Acts as a processive, ATP-dependent zinc metallopeptidase for both cytoplasmic and membrane proteins. Plays a role in the quality control of integral membrane proteins. In Caldicellulosiruptor bescii (strain ATCC BAA-1888 / DSM 6725 / KCTC 15123 / Z-1320) (Anaerocellum thermophilum), this protein is ATP-dependent zinc metalloprotease FtsH.